Reading from the N-terminus, the 157-residue chain is Transcription elongation factor GreB (157 aa).

Belongs to the GreA/GreB family. GreB subfamily.

Necessary for efficient RNA polymerase transcription elongation past template-encoded arresting sites. The arresting sites in DNA have the property of trapping a certain fraction of elongating RNA polymerases that pass through, resulting in locked ternary complexes. Cleavage of the nascent transcript by cleavage factors such as GreA or GreB allows the resumption of elongation from the new 3'terminus. GreB releases sequences of up to 9 nucleotides in length. This is Transcription elongation factor GreB from Salmonella typhimurium (strain LT2 / SGSC1412 / ATCC 700720).